Consider the following 170-residue polypeptide: MQLDEQRLRFRDAMASLSPAVNVITTEAEAGAAVSPHRPSCSVTDTPPSVMVCINANSAMNPVFQGNGKLCINVLNHEQEEMARHFAGMTGMTMDDRFGLSGWQKGALGQPVLKGALASLEGEISQVQTIGSHLVYLVEIRNITLSQQGHGLIYFKRRFHPVMMEMDVVA.

The protein belongs to the non-flavoprotein flavin reductase family. HpaC subfamily. Homodimer. 4-HPA 3-monooxygenase consists of a reductase component HpaC and an oxygenase component HpaB.

The enzyme catalyses a reduced flavin + NAD(+) = an oxidized flavin + NADH + 2 H(+). Its pathway is aromatic compound metabolism; 4-hydroxyphenylacetate degradation; pyruvate and succinate semialdehyde from 4-hydroxyphenylacetate: step 1/7. Functionally, catalyzes the reduction of free flavins (FMN, FAD and riboflavin) by NADH. Subsequently, the reduced flavins diffuse to the large HpaB component or to other electron acceptors such as cytochrome c and Fe(3+) ion. The chain is 4-hydroxyphenylacetate 3-monooxygenase reductase component (hpaC) from Klebsiella oxytoca.